A 207-amino-acid polypeptide reads, in one-letter code: High frequency lysogenization protein HflD homolog (207 aa).

Belongs to the HflD family.

The protein resides in the cytoplasm. Its subcellular location is the cell inner membrane. The polypeptide is High frequency lysogenization protein HflD homolog (Teredinibacter turnerae (strain ATCC 39867 / T7901)).